The primary structure comprises 309 residues: Methionyl-tRNA formyltransferase (309 aa).

Residue 109–112 (SLLP) coordinates (6S)-5,6,7,8-tetrahydrofolate.

It belongs to the Fmt family.

It carries out the reaction L-methionyl-tRNA(fMet) + (6R)-10-formyltetrahydrofolate = N-formyl-L-methionyl-tRNA(fMet) + (6S)-5,6,7,8-tetrahydrofolate + H(+). In terms of biological role, attaches a formyl group to the free amino group of methionyl-tRNA(fMet). The formyl group appears to play a dual role in the initiator identity of N-formylmethionyl-tRNA by promoting its recognition by IF2 and preventing the misappropriation of this tRNA by the elongation apparatus. The sequence is that of Methionyl-tRNA formyltransferase from Clostridium novyi (strain NT).